The following is a 323-amino-acid chain: tRNA U34 carboxymethyltransferase (323 aa).

Carboxy-S-adenosyl-L-methionine is bound by residues Lys-91, Trp-105, Lys-110, Gly-130, Asp-152–Thr-154, Ile-181–Glu-182, Met-196, Tyr-200, and Arg-315.

The protein belongs to the class I-like SAM-binding methyltransferase superfamily. CmoB family. Homotetramer.

It catalyses the reaction carboxy-S-adenosyl-L-methionine + 5-hydroxyuridine(34) in tRNA = 5-carboxymethoxyuridine(34) in tRNA + S-adenosyl-L-homocysteine + H(+). Functionally, catalyzes carboxymethyl transfer from carboxy-S-adenosyl-L-methionine (Cx-SAM) to 5-hydroxyuridine (ho5U) to form 5-carboxymethoxyuridine (cmo5U) at position 34 in tRNAs. The polypeptide is tRNA U34 carboxymethyltransferase (Escherichia coli O81 (strain ED1a)).